Here is a 321-residue protein sequence, read N- to C-terminus: Mitochondrial thiamine pyrophosphate carrier 1 (321 aa).

3 Solcar repeats span residues 12-110, 121-207, and 216-311; these read GSRQ…ISQM, PSSA…LKPV, and PLGS…AMGI. 6 helical membrane-spanning segments follow: residues 17 to 38, 91 to 107, 127 to 147, 182 to 199, 213 to 231, and 286 to 303; these read VVVA…LDVI, LLYL…YTNI, FISG…LDLL, GLGA…LFFA, LPLP…ASVV, and GLTV…VTMW.

This sequence belongs to the mitochondrial carrier (TC 2.A.29) family.

Its subcellular location is the mitochondrion inner membrane. Mitochondrial transporter that mediates uptake of thiamine pyrophosphate (ThPP) into mitochondria. This chain is Mitochondrial thiamine pyrophosphate carrier 1 (TPC1), found in Phaeosphaeria nodorum (strain SN15 / ATCC MYA-4574 / FGSC 10173) (Glume blotch fungus).